A 146-amino-acid chain; its full sequence is Hemoglobin subunit beta-1 (146 aa).

The residue at position 1 (Ser1) is an N-acetylserine. The region spanning 2-146 is the Globin domain; sequence FLSAEEKGLV…VASALAHRYH (145 aa). At Lys17 the chain carries N6-succinyllysine. Phosphoserine occurs at positions 44 and 50. At Lys59 the chain carries N6-succinyllysine. Heme b contacts are provided by His63 and His92. Residue Arg104 is modified to Asymmetric dimethylarginine.

It belongs to the globin family. Heterotetramer of two alpha chains and two beta chains. Red blood cells.

In terms of biological role, involved in oxygen transport from the lung to the various peripheral tissues. In Panthera leo (Lion), this protein is Hemoglobin subunit beta-1 (HBB1).